A 364-amino-acid polypeptide reads, in one-letter code: Chorismate synthase (364 aa).

NADP(+) is bound by residues R48 and R54. FMN contacts are provided by residues 125–127 (RSS), G282, 297–301 (KPPAS), and R323.

It belongs to the chorismate synthase family. In terms of assembly, homotetramer. FMNH2 is required as a cofactor.

The enzyme catalyses 5-O-(1-carboxyvinyl)-3-phosphoshikimate = chorismate + phosphate. It functions in the pathway metabolic intermediate biosynthesis; chorismate biosynthesis; chorismate from D-erythrose 4-phosphate and phosphoenolpyruvate: step 7/7. In terms of biological role, catalyzes the anti-1,4-elimination of the C-3 phosphate and the C-6 proR hydrogen from 5-enolpyruvylshikimate-3-phosphate (EPSP) to yield chorismate, which is the branch point compound that serves as the starting substrate for the three terminal pathways of aromatic amino acid biosynthesis. This reaction introduces a second double bond into the aromatic ring system. In Chloroflexus aggregans (strain MD-66 / DSM 9485), this protein is Chorismate synthase.